A 362-amino-acid chain; its full sequence is Talin rod domain-containing protein 1 (362 aa).

A disordered region spans residues 1–27 (MASGSAGKPTGEAASPAPGSAVGGASS). At A2 the chain carries N-acetylalanine. Positions 9–27 (PTGEAASPAPGSAVGGASS) are enriched in low complexity.

May homodimerize. Interacts with F-actin. Ubiquitous.

Functionally, actin-binding protein which may have an oncogenic function and regulates cell proliferation, migration and invasion in cancer cells. This is Talin rod domain-containing protein 1 from Mus musculus (Mouse).